The sequence spans 419 residues: Protein farnesyltransferase subunit beta (419 aa).

5 PFTB repeats span residues 68–109, 119–160, 167–208, 215–256, and 329–371; these read EDNT…ITLG, RNKL…SVLN, IKNV…ILIG, LPRL…ALLQ, and SIAL…SLCQ. (2E,6E)-farnesyl diphosphate contacts are provided by residues 193 to 196 and 235 to 238; these read HGGY and RTNK. Zn(2+)-binding residues include Asp241 and Cys243. 244–247 contacts (2E,6E)-farnesyl diphosphate; it reads YSFW. Position 359 (His359) interacts with Zn(2+).

This sequence belongs to the protein prenyltransferase subunit beta family. As to quaternary structure, heterodimer of FTA and FTB. Zn(2+) serves as cofactor.

It carries out the reaction L-cysteinyl-[protein] + (2E,6E)-farnesyl diphosphate = S-(2E,6E)-farnesyl-L-cysteinyl-[protein] + diphosphate. Catalyzes the transfer of a farnesyl moiety from farnesyl diphosphate to a cysteine at the fourth position from the C-terminus of several proteins. The beta subunit FTB is responsible for peptide-binding. The polypeptide is Protein farnesyltransferase subunit beta (FTB) (Pisum sativum (Garden pea)).